The chain runs to 352 residues: Peptide chain release factor 1 (352 aa).

At Gln-229 the chain carries N5-methylglutamine.

It belongs to the prokaryotic/mitochondrial release factor family. In terms of processing, methylated by PrmC. Methylation increases the termination efficiency of RF1.

It is found in the cytoplasm. Functionally, peptide chain release factor 1 directs the termination of translation in response to the peptide chain termination codons UAG and UAA. The chain is Peptide chain release factor 1 from Acidiphilium cryptum (strain JF-5).